A 320-amino-acid chain; its full sequence is Methionine import ATP-binding protein MetN (320 aa).

The ABC transporter domain maps to 2-237 (IEIKNVSKYF…PSSEMKKLIG (236 aa)). 34-41 (GHSGAGKS) is a binding site for ATP.

Belongs to the ABC transporter superfamily. Methionine importer (TC 3.A.1.24) family. As to quaternary structure, the complex is composed of two ATP-binding proteins (MetN), two transmembrane proteins (MetI) and a solute-binding protein (MetQ).

The protein localises to the cell membrane. It catalyses the reaction L-methionine(out) + ATP + H2O = L-methionine(in) + ADP + phosphate + H(+). The catalysed reaction is D-methionine(out) + ATP + H2O = D-methionine(in) + ADP + phosphate + H(+). Its function is as follows. Part of the ABC transporter complex MetNIQ involved in methionine import. Responsible for energy coupling to the transport system. This chain is Methionine import ATP-binding protein MetN, found in Clostridium acetobutylicum (strain ATCC 824 / DSM 792 / JCM 1419 / IAM 19013 / LMG 5710 / NBRC 13948 / NRRL B-527 / VKM B-1787 / 2291 / W).